The primary structure comprises 880 residues: DNA mismatch repair protein MutS (880 aa).

605 to 612 (GPNMSGKS) serves as a coordination point for ATP. Positions 790–829 (QETAAVPSRGVEPPAPVIEPTPAKEQTPVKEQTTPLVEES) are disordered. A compositionally biased stretch (polar residues) spans 818–829 (VKEQTTPLVEES).

Belongs to the DNA mismatch repair MutS family.

Functionally, this protein is involved in the repair of mismatches in DNA. It is possible that it carries out the mismatch recognition step. This protein has a weak ATPase activity. The polypeptide is DNA mismatch repair protein MutS (Limosilactobacillus fermentum (strain NBRC 3956 / LMG 18251) (Lactobacillus fermentum)).